A 255-amino-acid chain; its full sequence is Aliphatic sulfonates import ATP-binding protein SsuB (255 aa).

The ABC transporter domain occupies 12–233 (LLLNAVSKHY…RLGSVRLAEL (222 aa)). 44–51 (GRSGGGKS) is an ATP binding site.

The protein belongs to the ABC transporter superfamily. Aliphatic sulfonates importer (TC 3.A.1.17.2) family. As to quaternary structure, the complex is composed of two ATP-binding proteins (SsuB), two transmembrane proteins (SsuC) and a solute-binding protein (SsuA).

It is found in the cell inner membrane. It carries out the reaction ATP + H2O + aliphatic sulfonate-[sulfonate-binding protein]Side 1 = ADP + phosphate + aliphatic sulfonateSide 2 + [sulfonate-binding protein]Side 1.. In terms of biological role, part of the ABC transporter complex SsuABC involved in aliphatic sulfonates import. Responsible for energy coupling to the transport system. The protein is Aliphatic sulfonates import ATP-binding protein SsuB of Escherichia coli O6:H1 (strain CFT073 / ATCC 700928 / UPEC).